Consider the following 2114-residue polypeptide: MTSEMDDPEKAAVTITRLIEQLHAKKSSAQEKELSTARLLGLAKGKKECRKIISQNVNAMPAFISLLRSGTLLAKLNSASVLTVLCKDKNVRSKILIGGCIPPLLSLLKSDSVDAKRVVAEAIYEVSLCGMDGDNVGTKIFVTEGVVPSLWDQLKTGKKQDKTVEGHLVGALRNLCGDKDGFWALTLEDGGVDIILKLLQSSNPVSQSNAASLLARLIRIFTSSISKVEESGAVQVLVQLLGEENSVFVRASVVNALEAITSKSEEAITVARDLDGIHLLISAVVASSKESVEEETERVLQSYGTQALANLCGGMSGLIVYLGGLSLSPRLTEPIADILGALAYALRKFQLSCGDTREAFDPTLTEGILVKLLKPRDTQLIHERILEAMESLFGNVDLSKLLNNVDAKRVLVCLTILATDGPRERMITCLSNLCKHGDVWDAIGKREGIQILIPYLGLSSEQHQELSVEFLAILTDNVEESRWAVTSAGGIPPLLQILETGVSQKAKDDAVRVILNLCCHSEEIRLCVEKAGAIPALLGLLKNGGPKSQESSANTLLKLIKTADPSVIEQVQALFLGDAPKSKTHLIRVLGHVLASASLEEFVTKGSAANNGLRSLVQRLASSNEKMKENAASVLADLFSSRKDLCGGLGFDEDDNPCTKLLSGNTHAVATQLAHALGSLSNPTKKKTATKKLSGPEVEVIKPLIKSAKTNPIESTENPMSTLANLLSDPNVAAEALNDDVVSALTRVLREGTLQGKRNASHALHQLLKHFQVSDVFKGNEQCRFAVSELIDLLNATDLNNSAFIDVLEVLSLLAKAKYGANLSHNPFSAFGEVPSNLDSLVRGLAEGHPLVQDKAIEILSRFCKTQFILLGRLLVTQSKSISSLANRTINSSSPEIKVGGAILLVCAAKNDITLWAEAVEQSGYLKTLVNTLLDMSKQNSKSASYGIEIQRPRSFITSNLCLRMDDSEMVDPVTILGSTASMWLLSIICSSHPSNRLVVMEGNGLEIIAENLQRNKSNTQENSSDSEEKWIAMSFLAVMSQEPKVVSSPATENILQTLAPFMQSEQMIDGYFTAQVLAALVRHKNDKTISEIMNSDIVETTINLVGCEESDTRSLCALAEELSLVQNPYEATLEVLFENERVRSGSFTKKCIPLLVNLLKPYADKVGGIPVAIRLLRRIADNDDLSKLLIAEAGALDALAKYLSLSPQDSTEITVSELLESLFRSPEITRHKTAISSMKQLIGILHLASRSTRYNAARVLCELFSSEHIRDSELAWKALSPLIEMLNTTLESERVAALTALVKLTMGINPRPDILTSLEGNPLDNIYKILSLDSSSLESKTSAARICRFLFTNEGLRTSTSAACCIVSLISLIRTGKSTAIEAGMFALDRLLDIKRFVEVAEEHDCVNLFYGYVASENYLISEAAISCLTKMAKDNTPRKMDLIKMGIIEKCISQLSKSPPSSLCSVIADLFRVLTNVGVIARSQDAIKMVQPLLLILLRQDLDFQGQLGGLQAIANILEKPMVLESLKIASSTIIMPLIPLLESESIAVKNATTILLTSLLEMQRFQEEITTKNLIAPLVKLVGIRVRNLQEIALMGLERSSVTWPKEVADTGGIQELSKVIIDEDPQLPVYLWESAAFILCNILRINPEHYYFTVTIPVLSKMLFSTAESTVILAIDALIIRENQDSSSVQEMAESSALDALLDLLRSHHCEELSARLLELILRNPKVRETKICQFVLTPLSEYILDPDTISESAKILIAMALGDISQHEGLAKATDSPVACRALISLLEDEPSEEMQMVVMRALENFAMHSRTSRKAMAEAGGVYWVQEMLRSSNPQVSTQAALIIKSLFSNHTLQEYVSGEIIKSLTNAMEREFWTTTAINVEIVRTLNTILTTFPKLRSSEAATACIPHLIGALKSGEQEARDSAMDTIYTLRQSWTTMPTETARSQAVLAADAIPVLQLMMKSKLKSPAPSSFHERGNSLLNCLPGSLTVAIKRGDNLKRSNAFCRLIIDNCPTKKTKVVKRSSSPVWKESFTWDFAAPPRGQFLEIVCKSNNIFRNKNLGKVRIPIDKVLSEGSYSGIFKLNDESKKDNSSDRSLEIEIVWSNQSF.

42 ARM repeats span residues 2 to 42 (TSEM…LLGL), 46 to 87 (KKEC…VLCK), 89 to 128 (KNVR…EVSL), 135 to 177 (NVGT…NLCG), 180 to 219 (DGFW…RLIR), 222 to 262 (TSSI…AITS), 265 to 305 (EEAI…SYGT), 354 to 394 (GDTR…SLFG), 396 to 435 (VDLS…NLCK), 479 to 519 (EESR…NLCC), 522 to 561 (EEIR…KLIK), 563 to 595 (ADPS…HVLA), 601 to 640 (EFVT…DLFS), 643 to 682 (KDLC…SLSN), 708 to 750 (AKTN…RVLR), 774 to 816 (SDVF…LLAK), 825 to 865 (HNPF…RFCK), 870 to 910 (LLGR…CAAK), 914 to 953 (TLWA…IQRP), 994 to 1033 (PSNR…KWIA), 1044 to 1083 (PKVV…ALVR), 1087 to 1128 (DKTI…LVQN), 1141 to 1182 (ERVR…RIAD), 1185 to 1225 (DLSK…SLFR), 1227 to 1264 (PEIT…LCEL), 1265 to 1304 (FSSE…ALVK), 1312 to 1353 (RPDI…FLFT), 1355 to 1394 (EGLR…RLLD), 1396 to 1435 (KRFV…KMAK), 1454 to 1494 (ISQL…MVQP), 1496 to 1525 (LLIL…KPMV), 1526 to 1564 (LESL…SLLE), 1566 to 1605 (QRFQ…RSSV), 1606 to 1648 (TWPK…NILR), 1650 to 1689 (NPEH…ENQD), 1690 to 1730 (SSSV…RNPK), 1732 to 1771 (RETK…DISQ), 1772 to 1813 (HEGL…NFAM), 1816 to 1855 (RTSR…SLFS), 1857 to 1898 (HTLQ…TILT), 1901 to 1940 (PKLR…TLRQ), and 1949 to 1993 (TARS…CLPG). The region spanning 1974–2087 (SPAPSSFHER…LSEGSYSGIF (114 aa)) is the C2 domain.

In terms of assembly, associates with cellulase synthase (CESA) complexes. Binds to cortical microtubules.

It localises to the cell membrane. The protein localises to the cytoplasm. It is found in the cytoskeleton. Regulator of the microtubular cytoskeleton. Microtubule-associated protein involved in the association of cellulase synthase (CESA) complexes (CSCs) and cortical microtubules. Promotes dynamics of CSCs in the plasma membrane. Regulates primary cell wall biosynthesis and cellulose microfibrils organization. This Arabidopsis thaliana (Mouse-ear cress) protein is Protein CELLULOSE SYNTHASE INTERACTIVE 2.